The sequence spans 176 residues: ATP synthase subunit delta (176 aa).

The protein belongs to the ATPase delta chain family. As to quaternary structure, F-type ATPases have 2 components, F(1) - the catalytic core - and F(0) - the membrane proton channel. F(1) has five subunits: alpha(3), beta(3), gamma(1), delta(1), epsilon(1). F(0) has three main subunits: a(1), b(2) and c(10-14). The alpha and beta chains form an alternating ring which encloses part of the gamma chain. F(1) is attached to F(0) by a central stalk formed by the gamma and epsilon chains, while a peripheral stalk is formed by the delta and b chains.

It localises to the cell membrane. In terms of biological role, f(1)F(0) ATP synthase produces ATP from ADP in the presence of a proton or sodium gradient. F-type ATPases consist of two structural domains, F(1) containing the extramembraneous catalytic core and F(0) containing the membrane proton channel, linked together by a central stalk and a peripheral stalk. During catalysis, ATP synthesis in the catalytic domain of F(1) is coupled via a rotary mechanism of the central stalk subunits to proton translocation. This protein is part of the stalk that links CF(0) to CF(1). It either transmits conformational changes from CF(0) to CF(1) or is implicated in proton conduction. The protein is ATP synthase subunit delta of Wigglesworthia glossinidia brevipalpis.